The sequence spans 1080 residues: Origin recognition complex subunit 3 (1080 aa).

Disordered regions lie at residues 92–112 (YGIS…DDSS), 566–701 (TIKL…PKRI), and 869–902 (IKNE…ENEQ). Residues 651 to 661 (IKSDLECNDND) show a composition bias toward basic and acidic residues. The segment covering 662 to 671 (KDNDDNDNDI) has biased composition (acidic residues). 2 stretches are compositionally biased toward low complexity: residues 672–688 (NENN…NSNN) and 875–896 (QQQQ…QQQQ).

The protein belongs to the ORC3 family. In terms of assembly, ORC is composed of six subunits.

It localises to the nucleus. In terms of biological role, component of the origin recognition complex (ORC) that binds origins of replication. DNA-binding is ATP-dependent, however specific DNA sequences that define origins of replication have not been identified so far. ORC is required to assemble the pre-replication complex necessary to initiate DNA replication. This Dictyostelium discoideum (Social amoeba) protein is Origin recognition complex subunit 3 (orcC).